We begin with the raw amino-acid sequence, 475 residues long: MNTALAQQIANEGGVEAWMIAQQHKSLLRFLTCGSVDDGKSTLIGRLLHDTRQIYEDQLSSLHNDSKRHGTQGEKLDLALLVDGLQAEREQGITIDVAYRYFSTEKRKFIIADTPGHEQYTRNMATGASTCELAILLIDARKGVLDQTRRHSFISTLLGIKHLVVAINKMDLVDYSEETFTRIREDYLTFAGLLPGNLDIRFVPLSALEGDNVASQSESMPWYSGPTLLEVLETVEIQRVVDAQPMRFPVQYVNRPNLDFRGYAGTLASGRVEVGQRVKVLPSGVESNVARIVTFDGDREEAFAGEAITLVLTDEIDISRGDLLLAADETLPAVQSASVDVVWMAEQPLSPGQSYDIKIAGKKTRARVDGIRYQVDINNLTQREVENLPLNGIGLVDLTFDEPLVLDRYQQNPVTGGLILIDRLSNVTVGAGMVHEPVSQATAAPSQFSVFELELNALVRRHFPHWGARDLLGDK.

A tr-type G domain is found at 25 to 239; that stretch reads KSLLRFLTCG…EVLETVEIQR (215 aa). The segment at 34-41 is G1; the sequence is GSVDDGKS. 34 to 41 is a GTP binding site; sequence GSVDDGKS. The tract at residues 92-96 is G2; it reads GITID. A G3 region spans residues 113 to 116; that stretch reads DTPG. GTP-binding positions include 113–117 and 168–171; these read DTPGH and NKMD. The tract at residues 168 to 171 is G4; the sequence is NKMD. The interval 206–208 is G5; that stretch reads SAL.

This sequence belongs to the TRAFAC class translation factor GTPase superfamily. Classic translation factor GTPase family. CysN/NodQ subfamily. Heterodimer composed of CysD, the smaller subunit, and CysN.

The enzyme catalyses sulfate + ATP + H(+) = adenosine 5'-phosphosulfate + diphosphate. The protein operates within sulfur metabolism; hydrogen sulfide biosynthesis; sulfite from sulfate: step 1/3. Functionally, with CysD forms the ATP sulfurylase (ATPS) that catalyzes the adenylation of sulfate producing adenosine 5'-phosphosulfate (APS) and diphosphate, the first enzymatic step in sulfur assimilation pathway. APS synthesis involves the formation of a high-energy phosphoric-sulfuric acid anhydride bond driven by GTP hydrolysis by CysN coupled to ATP hydrolysis by CysD. The chain is Sulfate adenylyltransferase subunit 1 from Escherichia coli O127:H6 (strain E2348/69 / EPEC).